We begin with the raw amino-acid sequence, 151 residues long: Putative truncated GMC-type inactive oxidoreductase L893 (151 aa).

The protein belongs to the GMC oxidoreductase family.

It is found in the virion. In Acanthamoeba polyphaga (Amoeba), this protein is Putative truncated GMC-type inactive oxidoreductase L893.